We begin with the raw amino-acid sequence, 215 residues long: Cytochrome b6 (215 aa).

Residues 32–52 (IFYCLGGITLTCFLVQVATGF) traverse the membrane as a helical segment. Heme c is bound at residue Cys35. Residues His86 and His100 each coordinate heme b. 3 helical membrane passes run 90-110 (ASMM…TGGF), 116-136 (LTWV…VTGY), and 186-206 (LHTF…FLMI). Residues His187 and His202 each coordinate heme b.

The protein belongs to the cytochrome b family. PetB subfamily. In terms of assembly, the 4 large subunits of the cytochrome b6-f complex are cytochrome b6, subunit IV (17 kDa polypeptide, PetD), cytochrome f and the Rieske protein, while the 4 small subunits are PetG, PetL, PetM and PetN. The complex functions as a dimer. Heme b serves as cofactor. Heme c is required as a cofactor.

It is found in the plastid. The protein resides in the chloroplast thylakoid membrane. In terms of biological role, component of the cytochrome b6-f complex, which mediates electron transfer between photosystem II (PSII) and photosystem I (PSI), cyclic electron flow around PSI, and state transitions. The sequence is that of Cytochrome b6 from Arabidopsis thaliana (Mouse-ear cress).